The chain runs to 380 residues: Cytochrome b (380 aa).

Helical transmembrane passes span 34-54 (FGSLLGICLMTQILTGLLLAM), 78-99 (WLIRNLHANGASLFFICIYLHI), 114-134 (WNTGIILLLTLMATAFVGYVL), and 179-199 (FFALHFLLPFLIAGLTLIHLT). Heme b is bound by residues histidine 84 and histidine 98. Residues histidine 183 and histidine 197 each contribute to the heme b site. Histidine 202 contributes to the a ubiquinone binding site. The next 4 helical transmembrane spans lie at 227 to 247 (SKDILGFMLLYFLLTTLALLS), 289 to 309 (LGGVLALAASILILFLSPFLH), 321 to 341 (LSQALFWLLVTNLFILTWIGS), and 348 to 368 (FIIIGQLASLSYFTILLILLP).

This sequence belongs to the cytochrome b family. As to quaternary structure, the cytochrome bc1 complex contains 11 subunits: 3 respiratory subunits (MT-CYB, CYC1 and UQCRFS1), 2 core proteins (UQCRC1 and UQCRC2) and 6 low-molecular weight proteins (UQCRH/QCR6, UQCRB/QCR7, UQCRQ/QCR8, UQCR10/QCR9, UQCR11/QCR10 and a cleavage product of UQCRFS1). This cytochrome bc1 complex then forms a dimer. Heme b is required as a cofactor.

The protein resides in the mitochondrion inner membrane. Functionally, component of the ubiquinol-cytochrome c reductase complex (complex III or cytochrome b-c1 complex) that is part of the mitochondrial respiratory chain. The b-c1 complex mediates electron transfer from ubiquinol to cytochrome c. Contributes to the generation of a proton gradient across the mitochondrial membrane that is then used for ATP synthesis. The chain is Cytochrome b (MT-CYB) from Phalcoboenus australis (Striated caracara).